The chain runs to 78 residues: Large ribosomal subunit protein bL31 (78 aa).

Zn(2+)-binding residues include Cys16, Cys18, Cys38, and Cys41.

This sequence belongs to the bacterial ribosomal protein bL31 family. Type A subfamily. In terms of assembly, part of the 50S ribosomal subunit. Requires Zn(2+) as cofactor.

Functionally, binds the 23S rRNA. The sequence is that of Large ribosomal subunit protein bL31 from Frankia alni (strain DSM 45986 / CECT 9034 / ACN14a).